Consider the following 328-residue polypeptide: MDSANKNTKIFAEQLGNDFTISVDDEDMEMEYPLRSSTPTKVIDDQREILLQKASRISKLDEALCELNNESNGSIDLSIDSFIPSYDEFLHKKLLNEDTGHESKVSDQVKQVISTPMSTCFEQWFEGEEQSSTGNNQDISYSSVNSLSPKRRGISLMSIDANKLSPKKTSPNSGYITSPLRHPILLSETEPGTPTKNDSPAYIGLPSQPNSITTLNNTNQKFQVPDNDKPPMSSLNELSASYKPIVFDSSQHKTQGTDNNDSFYHDDTNCIHLSRLEKIRELLTFVQLELKYYVEPLKKELQETKTLLAQKEEEISNLKDKLQNAGLS.

Ser-170 is modified (phosphoserine).

It localises to the cytoplasm. The protein resides in the nucleus. This is an uncharacterized protein from Schizosaccharomyces pombe (strain 972 / ATCC 24843) (Fission yeast).